A 301-amino-acid chain; its full sequence is Glycine--tRNA ligase alpha subunit (301 aa).

It belongs to the class-II aminoacyl-tRNA synthetase family. As to quaternary structure, tetramer of two alpha and two beta subunits.

It localises to the cytoplasm. It catalyses the reaction tRNA(Gly) + glycine + ATP = glycyl-tRNA(Gly) + AMP + diphosphate. The chain is Glycine--tRNA ligase alpha subunit from Polaromonas sp. (strain JS666 / ATCC BAA-500).